The primary structure comprises 225 residues: Superoxide dismutase [Mn], mitochondrial (225 aa).

A mitochondrion-targeting transit peptide spans 1 to 27 (MITAITRTALPRATLRTSLATMSTIRA). Mn(2+)-binding residues include histidine 53, histidine 101, aspartate 187, and histidine 191.

Belongs to the iron/manganese superoxide dismutase family. Requires Mn(2+) as cofactor.

The protein localises to the mitochondrion. Its subcellular location is the cytoplasm. The enzyme catalyses 2 superoxide + 2 H(+) = H2O2 + O2. Destroys radicals which are normally produced within the cells and which are toxic to biological systems. Functionally, destroys mitochondrial radicals produced by oxidative stress. In terms of biological role, destroys cytoplasmic radicals produced in low copper environments; a condition which inactivates the cytoplasmic copper-dependent superoxide dismutase SOD1. This chain is Superoxide dismutase [Mn], mitochondrial, found in Cryptococcus neoformans var. grubii serotype A (strain H99 / ATCC 208821 / CBS 10515 / FGSC 9487) (Filobasidiella neoformans var. grubii).